The following is a 470-amino-acid chain: Argininosuccinate lyase (470 aa).

The protein belongs to the lyase 1 family. Argininosuccinate lyase subfamily.

The protein resides in the cytoplasm. The catalysed reaction is 2-(N(omega)-L-arginino)succinate = fumarate + L-arginine. The protein operates within amino-acid biosynthesis; L-arginine biosynthesis; L-arginine from L-ornithine and carbamoyl phosphate: step 3/3. The sequence is that of Argininosuccinate lyase from Mycobacterium tuberculosis (strain ATCC 25618 / H37Rv).